Here is a 247-residue protein sequence, read N- to C-terminus: 1-(5-phosphoribosyl)-5-[(5-phosphoribosylamino)methylideneamino] imidazole-4-carboxamide isomerase (247 aa).

Aspartate 8 (proton acceptor) is an active-site residue. Catalysis depends on aspartate 131, which acts as the Proton donor.

It belongs to the HisA/HisF family.

The protein localises to the cytoplasm. The enzyme catalyses 1-(5-phospho-beta-D-ribosyl)-5-[(5-phospho-beta-D-ribosylamino)methylideneamino]imidazole-4-carboxamide = 5-[(5-phospho-1-deoxy-D-ribulos-1-ylimino)methylamino]-1-(5-phospho-beta-D-ribosyl)imidazole-4-carboxamide. It functions in the pathway amino-acid biosynthesis; L-histidine biosynthesis; L-histidine from 5-phospho-alpha-D-ribose 1-diphosphate: step 4/9. This is 1-(5-phosphoribosyl)-5-[(5-phosphoribosylamino)methylideneamino] imidazole-4-carboxamide isomerase from Ralstonia pickettii (strain 12J).